A 469-amino-acid chain; its full sequence is 6-phospho-beta-galactosidase (469 aa).

5 residues coordinate D-galactose 6-phosphate: Gln19, His116, Asn159, Glu160, and Asn297. Glu160 (proton donor) is an active-site residue. Glu375 (nucleophile) is an active-site residue. D-galactose 6-phosphate is bound by residues Ser428, Trp429, Lys435, and Tyr437.

This sequence belongs to the glycosyl hydrolase 1 family.

It carries out the reaction a 6-phospho-beta-D-galactoside + H2O = D-galactose 6-phosphate + an alcohol. Its pathway is carbohydrate metabolism; lactose degradation; D-galactose 6-phosphate and beta-D-glucose from lactose 6-phosphate: step 1/1. In Streptococcus equi subsp. zooepidemicus (strain MGCS10565), this protein is 6-phospho-beta-galactosidase.